Reading from the N-terminus, the 208-residue chain is Uracil phosphoribosyltransferase (208 aa).

Residues arginine 78, arginine 103, and 130–138 (DPMLATGGS) each bind 5-phospho-alpha-D-ribose 1-diphosphate. Uracil is bound by residues isoleucine 193 and 198 to 200 (GDA). Residue aspartate 199 coordinates 5-phospho-alpha-D-ribose 1-diphosphate.

Belongs to the UPRTase family. Mg(2+) is required as a cofactor.

The catalysed reaction is UMP + diphosphate = 5-phospho-alpha-D-ribose 1-diphosphate + uracil. It participates in pyrimidine metabolism; UMP biosynthesis via salvage pathway; UMP from uracil: step 1/1. Allosterically activated by GTP. In terms of biological role, catalyzes the conversion of uracil and 5-phospho-alpha-D-ribose 1-diphosphate (PRPP) to UMP and diphosphate. The chain is Uracil phosphoribosyltransferase from Aliivibrio fischeri (strain MJ11) (Vibrio fischeri).